Consider the following 309-residue polypeptide: Mitochondrial import receptor subunit TOM34 (309 aa).

Phosphoserine is present on Ser8. 3 TPR repeats span residues 9 to 42 (VEQL…LQAR), 51 to 84 (SVLY…VPFS), and 86 to 118 (KPLL…DNSV). Residues 158-187 (WSSLPSENHKETAKSKSKETTATKNRVPSA) are disordered. Ser160 is subject to Phosphoserine. Positions 164–178 (ENHKETAKSKSKETT) are enriched in basic and acidic residues. Ser186 is modified (phosphoserine). TPR repeat units follow at residues 193 to 226 (ARVL…SSLE), 227 to 260 (SATY…DGKN), and 262 to 294 (KAFY…EPRN). A Glycyl lysine isopeptide (Lys-Gly) (interchain with G-Cter in SUMO2) cross-link involves residue Lys197.

This sequence belongs to the Tom34 family. Interacts with HSP90A, VCP, ATP6V1D, KIAA0665, AMPK, and DMAP1 through its TPR repeat.

It localises to the cytoplasm. It is found in the mitochondrion outer membrane. Plays a role in the import of cytosolically synthesized preproteins into mitochondria. Binds the mature portion of precursor proteins. Interacts with cellular components, and possesses weak ATPase activity. May be a chaperone-like protein that helps to keep newly synthesized precursors in an unfolded import compatible state. This chain is Mitochondrial import receptor subunit TOM34 (Tomm34), found in Rattus norvegicus (Rat).